The primary structure comprises 691 residues: Glycine--tRNA ligase beta subunit (691 aa).

Belongs to the class-II aminoacyl-tRNA synthetase family. In terms of assembly, tetramer of two alpha and two beta subunits.

Its subcellular location is the cytoplasm. It catalyses the reaction tRNA(Gly) + glycine + ATP = glycyl-tRNA(Gly) + AMP + diphosphate. This is Glycine--tRNA ligase beta subunit from Levilactobacillus brevis (strain ATCC 367 / BCRC 12310 / CIP 105137 / JCM 1170 / LMG 11437 / NCIMB 947 / NCTC 947) (Lactobacillus brevis).